Reading from the N-terminus, the 50-residue chain is Photosystem II reaction center protein M (50 aa).

Residues Gly-7–Ile-27 form a helical membrane-spanning segment.

It belongs to the PsbM family. As to quaternary structure, PSII is composed of 1 copy each of membrane proteins PsbA, PsbB, PsbC, PsbD, PsbE, PsbF, PsbH, PsbI, PsbJ, PsbK, PsbL, PsbM, PsbT, PsbX, PsbY, Psb30/Ycf12, peripheral proteins PsbO, CyanoQ (PsbQ), PsbU, PsbV and a large number of cofactors. It forms dimeric complexes.

Its subcellular location is the cellular thylakoid membrane. Its function is as follows. One of the components of the core complex of photosystem II (PSII). PSII is a light-driven water:plastoquinone oxidoreductase that uses light energy to abstract electrons from H(2)O, generating O(2) and a proton gradient subsequently used for ATP formation. It consists of a core antenna complex that captures photons, and an electron transfer chain that converts photonic excitation into a charge separation. This subunit is found at the monomer-monomer interface. The sequence is that of Photosystem II reaction center protein M from Prochlorococcus marinus (strain MIT 9515).